We begin with the raw amino-acid sequence, 365 residues long: tRNA/tmRNA (uracil-C(5))-methyltransferase (365 aa).

S-adenosyl-L-methionine-binding residues include Gln-189, Tyr-217, Asn-222, Glu-238, and Asp-298. The Nucleophile role is filled by Cys-323. Glu-357 serves as the catalytic Proton acceptor.

This sequence belongs to the class I-like SAM-binding methyltransferase superfamily. RNA M5U methyltransferase family. TrmA subfamily.

It catalyses the reaction uridine(54) in tRNA + S-adenosyl-L-methionine = 5-methyluridine(54) in tRNA + S-adenosyl-L-homocysteine + H(+). It carries out the reaction uridine(341) in tmRNA + S-adenosyl-L-methionine = 5-methyluridine(341) in tmRNA + S-adenosyl-L-homocysteine + H(+). Dual-specificity methyltransferase that catalyzes the formation of 5-methyluridine at position 54 (m5U54) in all tRNAs, and that of position 341 (m5U341) in tmRNA (transfer-mRNA). The protein is tRNA/tmRNA (uracil-C(5))-methyltransferase of Shewanella denitrificans (strain OS217 / ATCC BAA-1090 / DSM 15013).